The following is a 698-amino-acid chain: Long-chain-fatty-acid--CoA ligase 1 (698 aa).

Met1 bears the N-acetylmethionine mark. Tyr9 carries the 3'-nitrotyrosine modification. A helical; Signal-anchor for type III membrane protein transmembrane segment spans residues Leu25–Ala45. At Thr46–Val698 the chain is on the cytoplasmic side. Tyr84 is subject to Phosphotyrosine. Ser135 is a glycosylation site (O-linked (GlcNAc) serine). N6-acetyllysine occurs at positions 207, 356, and 386. At Ser620 the chain carries Phosphoserine. Lys632 bears the N6-acetyllysine mark.

Belongs to the ATP-dependent AMP-binding enzyme family. It depends on Mg(2+) as a cofactor. As to expression, highly expressed in liver, heart, skeletal muscle, kidney and erythroid cells, and to a lesser extent in brain, lung, placenta and pancreas.

It localises to the mitochondrion outer membrane. The protein resides in the peroxisome membrane. Its subcellular location is the microsome membrane. The protein localises to the endoplasmic reticulum membrane. The catalysed reaction is a long-chain fatty acid + ATP + CoA = a long-chain fatty acyl-CoA + AMP + diphosphate. It carries out the reaction (5Z,8Z,11Z,14Z)-eicosatetraenoate + ATP + CoA = (5Z,8Z,11Z,14Z)-eicosatetraenoyl-CoA + AMP + diphosphate. It catalyses the reaction 3,7,11,15-tetramethylhexadecanoate + ATP + CoA = phytanoyl-CoA + AMP + diphosphate. The enzyme catalyses hexadecanoate + ATP + CoA = hexadecanoyl-CoA + AMP + diphosphate. The catalysed reaction is (E)-hexadec-2-enoate + ATP + CoA = (2E)-hexadecenoyl-CoA + AMP + diphosphate. It carries out the reaction 2,6,10,14-tetramethylpentadecanoate + ATP + CoA = pristanoyl-CoA + AMP + diphosphate. It catalyses the reaction 14,15-epoxy-(5Z,8Z,11Z)-eicosatrienoate + ATP + CoA = 14,15-epoxy-(5Z,8Z,11Z)-eicosatrienoyl-CoA + AMP + diphosphate. The enzyme catalyses 5-hydroxy-(6E,8Z,11Z,14Z)-eicosatetraenoate + ATP + CoA = 5-hydroxy-(6E,8Z,11Z,14Z)-eicosatetraenoyl-CoA + AMP + diphosphate. The catalysed reaction is 12-hydroxy-(5Z,8Z,10E,14Z)-eicosatetraenoate + ATP + CoA = 12-hydroxy-(5Z,8Z,10E,14Z)-eicosatetraenoyl-CoA + AMP + diphosphate. It carries out the reaction 15-hydroxy-(5Z,8Z,11Z,13E)-eicosatetraenoate + ATP + CoA = 15-hydroxy-(5Z,8Z,11Z,13E)-eicosatetraenoyl-CoA + AMP + diphosphate. It catalyses the reaction (9Z)-octadecenoate + ATP + CoA = (9Z)-octadecenoyl-CoA + AMP + diphosphate. Inhibited at high temperature and by arachidonate. Catalyzes the conversion of long-chain fatty acids to their active form acyl-CoAs for both synthesis of cellular lipids, and degradation via beta-oxidation. Preferentially uses palmitoleate, oleate and linoleate. Preferentially activates arachidonate than epoxyeicosatrienoic acids (EETs) or hydroxyeicosatrienoic acids (HETEs). This chain is Long-chain-fatty-acid--CoA ligase 1, found in Homo sapiens (Human).